A 283-amino-acid chain; its full sequence is Thymidylate synthase (283 aa).

A dUMP-binding site is contributed by Arg21. His51 provides a ligand contact to (6R)-5,10-methylene-5,6,7,8-tetrahydrofolate. 123–124 is a binding site for dUMP; the sequence is RR. Cys156 serves as the catalytic Nucleophile. Residues 185–188, Asn196, and 226–228 each bind dUMP; these read RSAD and HIY. Residue Asp188 participates in (6R)-5,10-methylene-5,6,7,8-tetrahydrofolate binding. Ala282 lines the (6R)-5,10-methylene-5,6,7,8-tetrahydrofolate pocket.

It belongs to the thymidylate synthase family. Bacterial-type ThyA subfamily. In terms of assembly, homodimer.

Its subcellular location is the cytoplasm. The enzyme catalyses dUMP + (6R)-5,10-methylene-5,6,7,8-tetrahydrofolate = 7,8-dihydrofolate + dTMP. The protein operates within pyrimidine metabolism; dTTP biosynthesis. Catalyzes the reductive methylation of 2'-deoxyuridine-5'-monophosphate (dUMP) to 2'-deoxythymidine-5'-monophosphate (dTMP) while utilizing 5,10-methylenetetrahydrofolate (mTHF) as the methyl donor and reductant in the reaction, yielding dihydrofolate (DHF) as a by-product. This enzymatic reaction provides an intracellular de novo source of dTMP, an essential precursor for DNA biosynthesis. In Flavobacterium johnsoniae (strain ATCC 17061 / DSM 2064 / JCM 8514 / BCRC 14874 / CCUG 350202 / NBRC 14942 / NCIMB 11054 / UW101) (Cytophaga johnsonae), this protein is Thymidylate synthase.